A 293-amino-acid chain; its full sequence is 4-diphosphocytidyl-2-C-methyl-D-erythritol kinase (293 aa).

The active site involves K16. 99–109 (PMGAGLGGGSS) is a binding site for ATP. The active site involves D141.

Belongs to the GHMP kinase family. IspE subfamily.

The catalysed reaction is 4-CDP-2-C-methyl-D-erythritol + ATP = 4-CDP-2-C-methyl-D-erythritol 2-phosphate + ADP + H(+). Its pathway is isoprenoid biosynthesis; isopentenyl diphosphate biosynthesis via DXP pathway; isopentenyl diphosphate from 1-deoxy-D-xylulose 5-phosphate: step 3/6. Catalyzes the phosphorylation of the position 2 hydroxy group of 4-diphosphocytidyl-2C-methyl-D-erythritol. The protein is 4-diphosphocytidyl-2-C-methyl-D-erythritol kinase of Burkholderia pseudomallei (strain 668).